We begin with the raw amino-acid sequence, 440 residues long: O-glycoside alpha-1,2-mannosyltransferase homolog 4 (440 aa).

Over 1 to 35 (MLGWNKHVFFSESRINFRCLLRKKLKKRCPLSARF) the chain is Cytoplasmic. The chain crosses the membrane as a helical; Signal-anchor for type II membrane protein span at residues 36–56 (VLVLLLIVLIFILKMGYKQLI). Residues 57–440 (YKLNHPPLRR…NLIGDGFLDE (384 aa)) lie on the Lumenal side of the membrane. The Nucleophile role is filled by E336.

The protein belongs to the glycosyltransferase 15 family.

It localises to the cytoplasm. The protein localises to the nucleus. Its subcellular location is the golgi apparatus membrane. Functionally, probable mannosyltransferase involved in O-glycosylation of cell wall and secreted proteins. Transfers an alpha-D-mannosyl residue from GDP-mannose into lipid-linked oligosaccharide, forming an alpha-(1-&gt;2)-D-mannosyl-D-mannose linkage. The protein is O-glycoside alpha-1,2-mannosyltransferase homolog 4 (omh4) of Schizosaccharomyces pombe (strain 972 / ATCC 24843) (Fission yeast).